The sequence spans 457 residues: Bifunctional protein GlmU (457 aa).

The interval 1-230 (MSKRYAVVLA…FEESLGVNDR (230 aa)) is pyrophosphorylase. UDP-N-acetyl-alpha-D-glucosamine-binding positions include 9-12 (LAAG), K23, Q73, and 78-79 (GT). D103 contributes to the Mg(2+) binding site. The UDP-N-acetyl-alpha-D-glucosamine site is built by G140, E155, N170, and N228. N228 serves as a coordination point for Mg(2+). A linker region spans residues 231-251 (IALAEASRLMQRRINENHMRN). The tract at residues 252 to 457 (GVTLVNPENT…GYAKHLNHGK (206 aa)) is N-acetyltransferase. UDP-N-acetyl-alpha-D-glucosamine is bound by residues R333 and K351. Catalysis depends on H363, which acts as the Proton acceptor. Residues Y366 and N377 each contribute to the UDP-N-acetyl-alpha-D-glucosamine site. Acetyl-CoA-binding positions include 386-387 (NY), A423, and R440.

This sequence in the N-terminal section; belongs to the N-acetylglucosamine-1-phosphate uridyltransferase family. In the C-terminal section; belongs to the transferase hexapeptide repeat family. In terms of assembly, homotrimer. Requires Mg(2+) as cofactor.

The protein localises to the cytoplasm. It carries out the reaction alpha-D-glucosamine 1-phosphate + acetyl-CoA = N-acetyl-alpha-D-glucosamine 1-phosphate + CoA + H(+). It catalyses the reaction N-acetyl-alpha-D-glucosamine 1-phosphate + UTP + H(+) = UDP-N-acetyl-alpha-D-glucosamine + diphosphate. It functions in the pathway nucleotide-sugar biosynthesis; UDP-N-acetyl-alpha-D-glucosamine biosynthesis; N-acetyl-alpha-D-glucosamine 1-phosphate from alpha-D-glucosamine 6-phosphate (route II): step 2/2. Its pathway is nucleotide-sugar biosynthesis; UDP-N-acetyl-alpha-D-glucosamine biosynthesis; UDP-N-acetyl-alpha-D-glucosamine from N-acetyl-alpha-D-glucosamine 1-phosphate: step 1/1. It participates in bacterial outer membrane biogenesis; LPS lipid A biosynthesis. Its function is as follows. Catalyzes the last two sequential reactions in the de novo biosynthetic pathway for UDP-N-acetylglucosamine (UDP-GlcNAc). The C-terminal domain catalyzes the transfer of acetyl group from acetyl coenzyme A to glucosamine-1-phosphate (GlcN-1-P) to produce N-acetylglucosamine-1-phosphate (GlcNAc-1-P), which is converted into UDP-GlcNAc by the transfer of uridine 5-monophosphate (from uridine 5-triphosphate), a reaction catalyzed by the N-terminal domain. This is Bifunctional protein GlmU from Listeria monocytogenes serotype 4b (strain CLIP80459).